Reading from the N-terminus, the 63-residue chain is DNA-directed RNA polymerase 7 kDa subunit (63 aa).

This sequence belongs to the poxviridae DNA-directed RNA polymerase 7 kDa subunit family. In terms of assembly, the DNA-dependent RNA polymerase (vRNAP) consists of eight subunits encoded by early viral genes and termed according to their apparent molecular masses Rpo147, Rpo132, Rpo35, Rpo30, Rpo22, Rpo19, Rpo18, and Rpo7. The same holoenzyme, with the addition of the transcription-specificity factor RAP94, is used for early gene expression.

Its subcellular location is the virion. The enzyme catalyses RNA(n) + a ribonucleoside 5'-triphosphate = RNA(n+1) + diphosphate. In terms of biological role, part of the DNA-dependent RNA polymerase which catalyzes the transcription of viral DNA into RNA using the four ribonucleoside triphosphates as substrates. Responsible for the transcription of early, intermediate and late genes. DNA-dependent RNA polymerase associates with the early transcription factor (ETF), itself composed of OPG118 and OPG134, thereby allowing the early genes transcription. Late transcription, and probably also intermediate transcription, require newly synthesized RNA polymerase. The sequence is that of DNA-directed RNA polymerase 7 kDa subunit (OPG090) from Homo sapiens (Human).